Reading from the N-terminus, the 525-residue chain is GMP synthase [glutamine-hydrolyzing] (525 aa).

The Glutamine amidotransferase type-1 domain maps to 9–207 (RILILDFGSQ…VKEICHCEAL (199 aa)). The active-site Nucleophile is Cys-86. Catalysis depends on residues His-181 and Glu-183. In terms of domain architecture, GMPS ATP-PPase spans 208-400 (WTPATIIEDA…LGLPYNMLYR (193 aa)). Residue 235–241 (SGGVDSS) participates in ATP binding.

Homodimer.

It carries out the reaction XMP + L-glutamine + ATP + H2O = GMP + L-glutamate + AMP + diphosphate + 2 H(+). It functions in the pathway purine metabolism; GMP biosynthesis; GMP from XMP (L-Gln route): step 1/1. Functionally, catalyzes the synthesis of GMP from XMP. This Tolumonas auensis (strain DSM 9187 / NBRC 110442 / TA 4) protein is GMP synthase [glutamine-hydrolyzing].